A 1519-amino-acid chain; its full sequence is Dicer-like protein 1 (1519 aa).

The span at 1–13 (MTHQNTETASLAT) shows a compositional bias: polar residues. Residues 1–62 (MTHQNTETAS…KDPSQRQRQQ (62 aa)) form a disordered region. Over residues 39–48 (SDESEGSEEE) the composition is skewed to acidic residues. One can recognise a Helicase ATP-binding domain in the interval 116-297 (LFERAKVQNT…EAARNLEALL (182 aa)). Position 129 to 136 (129 to 136 (LDTGSGKT)) interacts with ATP. The short motif at 242–245 (DEAH) is the DEAH box element. Residues 431–601 (ALSSKVRVLW…QLLPEDRILH (171 aa)) form the Helicase C-terminal domain. A Dicer dsRNA-binding fold domain is found at 634 to 724 (AITVLARYAS…NSVYHRRLPA (91 aa)). A PAZ domain is found at 882–1001 (DDIEYQADMP…ICIEPLKISA (120 aa)). RNase III domains are found at residues 1026 to 1184 (GLEA…LTPG) and 1235 to 1387 (CRRV…VDSN). The Mg(2+) site is built by Glu-1275, Asp-1373, and Glu-1376. Positions 1421–1489 (TFLHNKLTNE…SENALTELLH (69 aa)) constitute a DRBM domain. Positions 1433, 1460, 1501, and 1503 each coordinate Zn(2+).

This sequence belongs to the helicase family. Dicer subfamily. The cofactor is Mg(2+). Requires Mn(2+) as cofactor.

Functionally, dicer-like endonuclease involved in cleaving double-stranded RNA in the RNA interference (RNAi) pathway. Produces 21 to 25 bp dsRNAs (siRNAs) which target the selective destruction of homologous RNAs leading to sequence-specific suppression of gene expression, called post-transcriptional gene silencing (PTGS). Part of a broad host defense response against viral infection and transposons. The chain is Dicer-like protein 1 (dcl1) from Aspergillus terreus (strain NIH 2624 / FGSC A1156).